The chain runs to 1054 residues: Acid trehalase (1054 aa).

The first 21 residues, 1-21, serve as a signal peptide directing secretion; that stretch reads MRFKSVFTLLPLLAQLPSGGA. Asn47, Asn135, Asn176, Asn283, and Asn307 each carry an N-linked (GlcNAc...) asparagine glycan. 448-449 is a substrate binding site; that stretch reads WD. 4 N-linked (GlcNAc...) asparagine glycosylation sites follow: Asn493, Asn513, Asn570, and Asn578. Glu584 serves as the catalytic Proton donor. Asn618 and Asn644 each carry an N-linked (GlcNAc...) asparagine glycan. 650-651 contacts substrate; that stretch reads KQ. N-linked (GlcNAc...) asparagine glycosylation is found at Asn665, Asn734, Asn803, Asn826, Asn838, Asn903, Asn937, Asn966, and Asn992.

It belongs to the glycosyl hydrolase 65 family.

The enzyme catalyses alpha,alpha-trehalose + H2O = alpha-D-glucose + beta-D-glucose. This is Acid trehalase (treA) from Emericella nidulans (strain FGSC A4 / ATCC 38163 / CBS 112.46 / NRRL 194 / M139) (Aspergillus nidulans).